Reading from the N-terminus, the 181-residue chain is Reverse rubrerythrin-1 (181 aa).

Residues 1 to 35 (MKKFKCVVCGYIYTGEDAPEKCPVCGAGKDKFVEV) form the Rubredoxin-like domain. Fe cation contacts are provided by Cys-6, Cys-9, Cys-22, Cys-25, Glu-69, Glu-102, Glu-132, Glu-165, and His-168. One can recognise a Ferritin-like diiron domain in the interval 52–181 (KGVDKEVLEG…FRGLLNRYFK (130 aa)).

As to quaternary structure, homodimer. It depends on Fe(3+) as a cofactor.

It carries out the reaction H2O2 + NADH + H(+) = NAD(+) + 2 H2O. In terms of biological role, functions as the terminal component of an NADH peroxidase (NADH:H(2)O(2) oxidoreductase) when using NADH:rubredoxin oxidoreductase (NROR) and rubredoxin (Rd) as electron transport intermediaries from NADH to revRbr 1. Plays an important role in the oxidative stress defense system in C.acetobutylicum, an obligate anaerobic bacterium. Also exhibits NADH oxidase (NADH:O(2) oxidoreductase) activity in vitro, which is 100-fold lesser than that of FprA1/2 using the same electron transfer components. Therefore, its predominant function is most likely as a scavenger of its preferred substrate, H(2)O(2). This chain is Reverse rubrerythrin-1 (rbr3A), found in Clostridium acetobutylicum (strain ATCC 824 / DSM 792 / JCM 1419 / IAM 19013 / LMG 5710 / NBRC 13948 / NRRL B-527 / VKM B-1787 / 2291 / W).